Consider the following 770-residue polypeptide: 1,4-alpha-glucan branching enzyme GlgB (770 aa).

Asp-437 serves as the catalytic Nucleophile. The Proton donor role is filled by Glu-488.

The protein belongs to the glycosyl hydrolase 13 family. GlgB subfamily. As to quaternary structure, monomer.

The catalysed reaction is Transfers a segment of a (1-&gt;4)-alpha-D-glucan chain to a primary hydroxy group in a similar glucan chain.. Its pathway is glycan biosynthesis; glycogen biosynthesis. Catalyzes the formation of the alpha-1,6-glucosidic linkages in glycogen by scission of a 1,4-alpha-linked oligosaccharide from growing alpha-1,4-glucan chains and the subsequent attachment of the oligosaccharide to the alpha-1,6 position. This chain is 1,4-alpha-glucan branching enzyme GlgB, found in Synechococcus sp. (strain JA-3-3Ab) (Cyanobacteria bacterium Yellowstone A-Prime).